The following is a 79-amino-acid chain: MKSLVIVFVVLLGVAMISANEEELLAILQDQRNDARGGCMNRYKSNICGTLVTPMNCIAPRTRMGKFARKFCQFMCGIC.

The first 19 residues, methionine 1–alanine 19, serve as a signal peptide directing secretion. Residues asparagine 20 to arginine 36 constitute a propeptide that is removed on maturation.

It belongs to the sea anemone 8 toxin family.

It is found in the secreted. It localises to the nematocyst. The sequence is that of U-actitoxin-Avd8a from Anemonia viridis (Snakelocks anemone).